The primary structure comprises 100 residues: Co-chaperonin GroES (100 aa).

This sequence belongs to the GroES chaperonin family. Heptamer of 7 subunits arranged in a ring. Interacts with the chaperonin GroEL.

It is found in the cytoplasm. Its function is as follows. Together with the chaperonin GroEL, plays an essential role in assisting protein folding. The GroEL-GroES system forms a nano-cage that allows encapsulation of the non-native substrate proteins and provides a physical environment optimized to promote and accelerate protein folding. GroES binds to the apical surface of the GroEL ring, thereby capping the opening of the GroEL channel. The polypeptide is Co-chaperonin GroES (Mycolicibacterium smegmatis (strain ATCC 700084 / mc(2)155) (Mycobacterium smegmatis)).